The following is a 124-amino-acid chain: Replication restart protein PriB (124 aa).

In terms of domain architecture, SSB spans 12-112 (IDNCLTLTGI…LHTEQIEFID (101 aa)).

The protein belongs to the PriB family. In terms of assembly, homodimer. Interacts with PriA and DnaT. Component of the replication restart primosome. Primosome assembly occurs via a 'hand-off' mechanism. PriA binds to replication forks, subsequently PriB then DnaT bind; DnaT then displaces ssDNA to generate the helicase loading substrate.

Functionally, involved in the restart of stalled replication forks, which reloads the replicative helicase on sites other than the origin of replication; the PriA-PriB pathway is the major replication restart pathway. During primosome assembly it facilitates complex formation between PriA and DnaT on DNA; stabilizes PriA on DNA. Stimulates the DNA unwinding activity of PriA helicase. In Haemophilus ducreyi (strain 35000HP / ATCC 700724), this protein is Replication restart protein PriB.